A 596-amino-acid chain; its full sequence is Structural protein precursor VP8 (596 aa).

The protein resides in the virion. Its function is as follows. 120 subunits of the putative clamp protein VP8b appear to stabilize the capsid shell. The chain is Structural protein precursor VP8 from Oryza latifolia (Indian wild rice).